A 407-amino-acid polypeptide reads, in one-letter code: Methylthioribose-1-phosphate isomerase (407 aa).

The Proton donor role is filled by D275.

This sequence belongs to the eIF-2B alpha/beta/delta subunits family. MtnA subfamily.

Its subcellular location is the cytoplasm. The protein resides in the nucleus. The catalysed reaction is 5-(methylsulfanyl)-alpha-D-ribose 1-phosphate = 5-(methylsulfanyl)-D-ribulose 1-phosphate. It functions in the pathway amino-acid biosynthesis; L-methionine biosynthesis via salvage pathway; L-methionine from S-methyl-5-thio-alpha-D-ribose 1-phosphate: step 1/6. Functionally, catalyzes the interconversion of methylthioribose-1-phosphate (MTR-1-P) into methylthioribulose-1-phosphate (MTRu-1-P). In Kluyveromyces lactis (strain ATCC 8585 / CBS 2359 / DSM 70799 / NBRC 1267 / NRRL Y-1140 / WM37) (Yeast), this protein is Methylthioribose-1-phosphate isomerase.